A 155-amino-acid polypeptide reads, in one-letter code: RNA pyrophosphohydrolase (155 aa).

Positions 5–147 constitute a Nudix hydrolase domain; the sequence is RYRPNVAAIV…KRPVYKKVLE (143 aa). The Nudix box signature appears at 42 to 63; it reads GGIDKGESPKEALLRELKEEIG.

This sequence belongs to the Nudix hydrolase family. RppH subfamily. A divalent metal cation serves as cofactor.

Accelerates the degradation of transcripts by removing pyrophosphate from the 5'-end of triphosphorylated RNA, leading to a more labile monophosphorylated state that can stimulate subsequent ribonuclease cleavage. This is RNA pyrophosphohydrolase from Nitratiruptor sp. (strain SB155-2).